The sequence spans 101 residues: Phosphoribosyl-AMP cyclohydrolase (101 aa).

A Mg(2+)-binding site is contributed by aspartate 71. A Zn(2+)-binding site is contributed by cysteine 72. Aspartate 73 and aspartate 75 together coordinate Mg(2+). Positions 88 and 95 each coordinate Zn(2+).

This sequence belongs to the PRA-CH family. As to quaternary structure, homodimer. Mg(2+) is required as a cofactor. It depends on Zn(2+) as a cofactor.

It is found in the cytoplasm. The enzyme catalyses 1-(5-phospho-beta-D-ribosyl)-5'-AMP + H2O = 1-(5-phospho-beta-D-ribosyl)-5-[(5-phospho-beta-D-ribosylamino)methylideneamino]imidazole-4-carboxamide. The protein operates within amino-acid biosynthesis; L-histidine biosynthesis; L-histidine from 5-phospho-alpha-D-ribose 1-diphosphate: step 3/9. Functionally, catalyzes the hydrolysis of the adenine ring of phosphoribosyl-AMP. The protein is Phosphoribosyl-AMP cyclohydrolase of Bacillus cereus (strain 03BB102).